Reading from the N-terminus, the 359-residue chain is Holliday junction branch migration complex subunit RuvB (359 aa).

Residues 1-187 are large ATPase domain (RuvB-L); it reads MSGLEHGDAS…FGFTAHLEFY (187 aa). Residues leucine 26, arginine 27, glycine 68, lysine 71, threonine 72, threonine 73, 134–136, arginine 177, tyrosine 187, and arginine 224 contribute to the ATP site; that span reads EDY. Threonine 72 is a binding site for Mg(2+). The interval 188–257 is small ATPAse domain (RuvB-S); that stretch reads ETHELEQVIE…SVRAALDLYD (70 aa). The tract at residues 260–359 is head domain (RuvB-H); that stretch reads PLGLDRLDRA…VAGALFGDEL (100 aa). Arginine 315 and arginine 320 together coordinate DNA.

Belongs to the RuvB family. As to quaternary structure, homohexamer. Forms an RuvA(8)-RuvB(12)-Holliday junction (HJ) complex. HJ DNA is sandwiched between 2 RuvA tetramers; dsDNA enters through RuvA and exits via RuvB. An RuvB hexamer assembles on each DNA strand where it exits the tetramer. Each RuvB hexamer is contacted by two RuvA subunits (via domain III) on 2 adjacent RuvB subunits; this complex drives branch migration. In the full resolvosome a probable DNA-RuvA(4)-RuvB(12)-RuvC(2) complex forms which resolves the HJ.

The protein localises to the cytoplasm. The catalysed reaction is ATP + H2O = ADP + phosphate + H(+). The RuvA-RuvB-RuvC complex processes Holliday junction (HJ) DNA during genetic recombination and DNA repair, while the RuvA-RuvB complex plays an important role in the rescue of blocked DNA replication forks via replication fork reversal (RFR). RuvA specifically binds to HJ cruciform DNA, conferring on it an open structure. The RuvB hexamer acts as an ATP-dependent pump, pulling dsDNA into and through the RuvAB complex. RuvB forms 2 homohexamers on either side of HJ DNA bound by 1 or 2 RuvA tetramers; 4 subunits per hexamer contact DNA at a time. Coordinated motions by a converter formed by DNA-disengaged RuvB subunits stimulates ATP hydrolysis and nucleotide exchange. Immobilization of the converter enables RuvB to convert the ATP-contained energy into a lever motion, pulling 2 nucleotides of DNA out of the RuvA tetramer per ATP hydrolyzed, thus driving DNA branch migration. The RuvB motors rotate together with the DNA substrate, which together with the progressing nucleotide cycle form the mechanistic basis for DNA recombination by continuous HJ branch migration. Branch migration allows RuvC to scan DNA until it finds its consensus sequence, where it cleaves and resolves cruciform DNA. This chain is Holliday junction branch migration complex subunit RuvB, found in Clavibacter michiganensis subsp. michiganensis (strain NCPPB 382).